Consider the following 630-residue polypeptide: Threonine--tRNA ligase (630 aa).

The editing domain stretch occupies residues 1 to 137 (MKVLLIHSDY…PLSELSRKIT (137 aa)). Positions 207–506 (PHVKFITEKE…ADAGAPPMLP (300 aa)) are catalytic. Zn(2+) is bound by residues C299, H351, and H475.

This sequence belongs to the class-II aminoacyl-tRNA synthetase family. In terms of assembly, homodimer. The cofactor is Zn(2+).

Its subcellular location is the cytoplasm. The enzyme catalyses tRNA(Thr) + L-threonine + ATP = L-threonyl-tRNA(Thr) + AMP + diphosphate + H(+). Functionally, catalyzes the attachment of threonine to tRNA(Thr) in a two-step reaction: L-threonine is first activated by ATP to form Thr-AMP and then transferred to the acceptor end of tRNA(Thr). Also edits incorrectly charged L-seryl-tRNA(Thr). This Methanococcus aeolicus (strain ATCC BAA-1280 / DSM 17508 / OCM 812 / Nankai-3) protein is Threonine--tRNA ligase.